A 396-amino-acid polypeptide reads, in one-letter code: Arginine biosynthesis bifunctional protein ArgJ (396 aa).

Substrate is bound by residues Thr-147, Lys-173, Thr-184, Glu-270, Asn-391, and Ser-396. The Nucleophile role is filled by Thr-184.

This sequence belongs to the ArgJ family. In terms of assembly, heterotetramer of two alpha and two beta chains.

It is found in the cytoplasm. It carries out the reaction N(2)-acetyl-L-ornithine + L-glutamate = N-acetyl-L-glutamate + L-ornithine. The catalysed reaction is L-glutamate + acetyl-CoA = N-acetyl-L-glutamate + CoA + H(+). It functions in the pathway amino-acid biosynthesis; L-arginine biosynthesis; L-ornithine and N-acetyl-L-glutamate from L-glutamate and N(2)-acetyl-L-ornithine (cyclic): step 1/1. It participates in amino-acid biosynthesis; L-arginine biosynthesis; N(2)-acetyl-L-ornithine from L-glutamate: step 1/4. Catalyzes two activities which are involved in the cyclic version of arginine biosynthesis: the synthesis of N-acetylglutamate from glutamate and acetyl-CoA as the acetyl donor, and of ornithine by transacetylation between N(2)-acetylornithine and glutamate. The sequence is that of Arginine biosynthesis bifunctional protein ArgJ from Lactococcus lactis subsp. lactis (strain IL1403) (Streptococcus lactis).